The primary structure comprises 374 residues: Type IV secretion system protein PtlG homolog (374 aa).

A helical membrane pass occupies residues 38–56 (WMFALVAVALSCLLATGIW). The interval 86–117 (HPREPEPAPLPDMPAAPDPILPQPRPAPPVPP) is disordered. Over residues 92–117 (PAPLPDMPAAPDPILPQPRPAPPVPP) the composition is skewed to pro residues.

It belongs to the TrbI/VirB10 family.

The protein localises to the cell membrane. The polypeptide is Type IV secretion system protein PtlG homolog (ptlG) (Bordetella bronchiseptica (strain ATCC BAA-588 / NCTC 13252 / RB50) (Alcaligenes bronchisepticus)).